The following is a 556-amino-acid chain: Polyphenol oxidase 2 (556 aa).

Residues His57, His81, His90, His250, His254, and His282 each contribute to the Cu cation site. A cross-link (2'-(S-cysteinyl)-histidine (Cys-His)) is located at residues 79-81; the sequence is CTH. Substrate is bound at residue His254. Positions 379 to 556 are cleaved as a propeptide — removed in mature form; it reads SKPSSGARNT…FDDVAVHVIN (178 aa).

It belongs to the tyrosinase family. In terms of assembly, heterotetramer. Cu(2+) serves as cofactor. The C-ter is probably cleaved after Gly-378 since the mature active protein is smaller than the protein encoded by the gene.

The catalysed reaction is 2 L-dopa + O2 = 2 L-dopaquinone + 2 H2O. It carries out the reaction L-tyrosine + O2 = L-dopaquinone + H2O. In terms of biological role, copper-containing oxidase that catalyzes both the o-hydroxylation of monophenols and the subsequent oxidation of the resulting o-diphenols into reactive o-quinones, which evolve spontaneously to produce intermediates, which associate in dark brown pigments. Involved in the initial step of melanin synthesis. Melanins constitute a mechanism of defense and resistance to stress such as UV radiations, free radicals, gamma rays, dehydratation and extreme temperatures, and contribute to the fungal cell-wall resistance against hydrolytic enzymes in avoiding cellular lysis. Fungal pigments are also involved in the formation and stability of spores. The sequence is that of Polyphenol oxidase 2 (PPO2) from Agaricus bisporus (White button mushroom).